The following is a 379-amino-acid chain: Polycomb group protein FIE2 (379 aa).

WD repeat units follow at residues aspartate 85–serine 128, glycine 131–isoleucine 171, glycine 177–aspartate 217, valine 243–glycine 280, valine 292–isoleucine 333, and glutamine 340–arginine 378.

Belongs to the WD repeat ESC family. In terms of tissue distribution, widely expressed. Expressed in the embryo sac before pollination. After pollination, its expression persists, predominantly in the embryo and at lower levels in the endosperm.

Its subcellular location is the nucleus. Its function is as follows. Polycomb group (PcG) protein. PcG proteins act by forming multiprotein complexes, which are required to maintain the transcriptionally repressive state of homeotic genes throughout development. PcG proteins are not required to initiate repression, but to maintain it during later stages of development. They probably act via the methylation of histones, rendering chromatin heritably changed in its expressibility. The protein is Polycomb group protein FIE2 (FIE2) of Zea mays (Maize).